The following is a 677-amino-acid chain: Methionine--tRNA ligase (677 aa).

Positions P14–H24 match the 'HIGH' region motif. Zn(2+) contacts are provided by C145, C148, C158, and C161. Positions K331–S335 match the 'KMSKS' region motif. K334 is an ATP binding site. Residues A575–K677 form the tRNA-binding domain.

It belongs to the class-I aminoacyl-tRNA synthetase family. MetG type 1 subfamily. In terms of assembly, homodimer. The cofactor is Zn(2+).

The protein localises to the cytoplasm. The catalysed reaction is tRNA(Met) + L-methionine + ATP = L-methionyl-tRNA(Met) + AMP + diphosphate. Functionally, is required not only for elongation of protein synthesis but also for the initiation of all mRNA translation through initiator tRNA(fMet) aminoacylation. In Pseudomonas aeruginosa (strain LESB58), this protein is Methionine--tRNA ligase.